Here is a 185-residue protein sequence, read N- to C-terminus: ATP-dependent protease subunit HslV (185 aa).

Residue threonine 14 is part of the active site. Na(+) is bound by residues alanine 168, cysteine 171, and threonine 174.

This sequence belongs to the peptidase T1B family. HslV subfamily. As to quaternary structure, a double ring-shaped homohexamer of HslV is capped on each side by a ring-shaped HslU homohexamer. The assembly of the HslU/HslV complex is dependent on binding of ATP.

Its subcellular location is the cytoplasm. It catalyses the reaction ATP-dependent cleavage of peptide bonds with broad specificity.. With respect to regulation, allosterically activated by HslU binding. Protease subunit of a proteasome-like degradation complex believed to be a general protein degrading machinery. The polypeptide is ATP-dependent protease subunit HslV (Hyphomonas neptunium (strain ATCC 15444)).